The sequence spans 180 residues: ATP-dependent protease subunit HslV (180 aa).

The active site involves Thr5. 3 residues coordinate Na(+): Gly161, Cys164, and Thr167.

Belongs to the peptidase T1B family. HslV subfamily. As to quaternary structure, a double ring-shaped homohexamer of HslV is capped on each side by a ring-shaped HslU homohexamer. The assembly of the HslU/HslV complex is dependent on binding of ATP.

It is found in the cytoplasm. It carries out the reaction ATP-dependent cleavage of peptide bonds with broad specificity.. Allosterically activated by HslU binding. Functionally, protease subunit of a proteasome-like degradation complex believed to be a general protein degrading machinery. The chain is ATP-dependent protease subunit HslV from Campylobacter lari (strain RM2100 / D67 / ATCC BAA-1060).